Consider the following 865-residue polypeptide: Probable beta-glucosidase J (865 aa).

Residue Asp233 is part of the active site. Asn330, Asn447, Asn503, and Asn764 each carry an N-linked (GlcNAc...) asparagine glycan. Residues 411–579 form the PA14 domain; the sequence is TGQPGYTFRV…DTDTAIQQAV (169 aa).

It belongs to the glycosyl hydrolase 3 family.

It is found in the secreted. It catalyses the reaction Hydrolysis of terminal, non-reducing beta-D-glucosyl residues with release of beta-D-glucose.. The protein operates within glycan metabolism; cellulose degradation. Beta-glucosidases are one of a number of cellulolytic enzymes involved in the degradation of cellulosic biomass. Catalyzes the last step releasing glucose from the inhibitory cellobiose. The chain is Probable beta-glucosidase J (bglJ) from Aspergillus fumigatus (strain ATCC MYA-4609 / CBS 101355 / FGSC A1100 / Af293) (Neosartorya fumigata).